The following is a 105-amino-acid chain: Small ribosomal subunit protein uS10 (105 aa).

The protein belongs to the universal ribosomal protein uS10 family. In terms of assembly, part of the 30S ribosomal subunit.

In terms of biological role, involved in the binding of tRNA to the ribosomes. The sequence is that of Small ribosomal subunit protein uS10 from Lawsonia intracellularis (strain PHE/MN1-00).